Here is a 361-residue protein sequence, read N- to C-terminus: 3-dehydroquinate synthase (361 aa).

NAD(+) contacts are provided by residues 105-109 (GVIGD), 129-130 (TT), K142, K151, and 169-172 (FLST). Residues E184, H247, and H264 each contribute to the Zn(2+) site.

The protein belongs to the sugar phosphate cyclases superfamily. Dehydroquinate synthase family. Requires Co(2+) as cofactor. It depends on Zn(2+) as a cofactor. The cofactor is NAD(+).

It is found in the cytoplasm. The enzyme catalyses 7-phospho-2-dehydro-3-deoxy-D-arabino-heptonate = 3-dehydroquinate + phosphate. It participates in metabolic intermediate biosynthesis; chorismate biosynthesis; chorismate from D-erythrose 4-phosphate and phosphoenolpyruvate: step 2/7. Functionally, catalyzes the conversion of 3-deoxy-D-arabino-heptulosonate 7-phosphate (DAHP) to dehydroquinate (DHQ). The polypeptide is 3-dehydroquinate synthase (Endomicrobium trichonymphae).